The sequence spans 193 residues: Putative kinase protein 029R (193 aa).

Residue 9 to 17 coordinates ATP; the sequence is GIIGSGKSS. 3 residues coordinate substrate: E31, Y43, and Q54. E78 serves as the catalytic Proton acceptor. Residues R79 and E142 each contribute to the substrate site.

It belongs to the DCK/DGK family.

This chain is Putative kinase protein 029R, found in Aedes vexans (Inland floodwater mosquito).